The chain runs to 101 residues: Small ribosomal subunit protein uS10 (101 aa).

This sequence belongs to the universal ribosomal protein uS10 family. As to quaternary structure, part of the 30S ribosomal subunit.

In terms of biological role, involved in the binding of tRNA to the ribosomes. The chain is Small ribosomal subunit protein uS10 from Methanocaldococcus jannaschii (strain ATCC 43067 / DSM 2661 / JAL-1 / JCM 10045 / NBRC 100440) (Methanococcus jannaschii).